Reading from the N-terminus, the 202-residue chain is Large ribosomal subunit protein bL25 (202 aa).

This sequence belongs to the bacterial ribosomal protein bL25 family. CTC subfamily. In terms of assembly, part of the 50S ribosomal subunit; part of the 5S rRNA/L5/L18/L25 subcomplex. Contacts the 5S rRNA. Binds to the 5S rRNA independently of L5 and L18.

Functionally, this is one of the proteins that binds to the 5S RNA in the ribosome where it forms part of the central protuberance. In Chlorobium luteolum (strain DSM 273 / BCRC 81028 / 2530) (Pelodictyon luteolum), this protein is Large ribosomal subunit protein bL25.